We begin with the raw amino-acid sequence, 222 residues long: 7-cyano-7-deazaguanine synthase (222 aa).

ATP is bound at residue 11-21; sequence FSGGQDSTTCL. Zn(2+) is bound by residues Cys-187, Cys-195, Cys-198, and Cys-201.

The protein belongs to the QueC family. Requires Zn(2+) as cofactor.

It catalyses the reaction 7-carboxy-7-deazaguanine + NH4(+) + ATP = 7-cyano-7-deazaguanine + ADP + phosphate + H2O + H(+). The protein operates within purine metabolism; 7-cyano-7-deazaguanine biosynthesis. Its function is as follows. Catalyzes the ATP-dependent conversion of 7-carboxy-7-deazaguanine (CDG) to 7-cyano-7-deazaguanine (preQ(0)). In Actinobacillus pleuropneumoniae serotype 5b (strain L20), this protein is 7-cyano-7-deazaguanine synthase.